A 385-amino-acid polypeptide reads, in one-letter code: Transcription termination factor 2, mitochondrial (385 aa).

Residues 1 to 35 (MPWRLPTGHQLCRLCLLRKPRPALKIKPSSACVTY) constitute a mitochondrion transit peptide.

It belongs to the mTERF family. In terms of assembly, monomer.

Its subcellular location is the mitochondrion matrix. The protein localises to the mitochondrion nucleoid. Its function is as follows. Binds mitochondrial DNA and plays a role in the regulation of transcription of mitochondrial mRNA and rRNA species. The polypeptide is Transcription termination factor 2, mitochondrial (Mterf2) (Mus musculus (Mouse)).